A 657-amino-acid chain; its full sequence is Protein mono-ADP-ribosyltransferase TIPARP (657 aa).

Over residues 1 to 10 (MEVETTEPEP) the composition is skewed to acidic residues. The tract at residues 1-22 (MEVETTEPEPDCVVQPPSPSDD) is disordered. At Cys39 the chain carries ADP-ribosylcysteine. The Nuclear localization signal motif lies at 41 to 48 (KKKQEQKR). The interval 121–154 (QLPEAHPSTDAPEQGVPIQDHSFPPETISGTVAD) is disordered. The C3H1-type zinc-finger motif lies at 238–265 (ENGIEICMDFLQGTCIYGRDCLKHHTVL). A WWE domain is found at 333-411 (STPPCSNSNS…RRPLFRSCFI (79 aa)). Residues 449–657 (YPETWVYMHP…YEEVSNTVSI (209 aa)) form the PARP catalytic domain.

It belongs to the ARTD/PARP family. Interacts with AHR. In terms of processing, auto-mono-ADP-ribosylated. Ubiquitously expressed.

The protein localises to the nucleus. The enzyme catalyses L-aspartyl-[protein] + NAD(+) = 4-O-(ADP-D-ribosyl)-L-aspartyl-[protein] + nicotinamide. The catalysed reaction is L-glutamyl-[protein] + NAD(+) = 5-O-(ADP-D-ribosyl)-L-glutamyl-[protein] + nicotinamide. It catalyses the reaction L-cysteinyl-[protein] + NAD(+) = S-(ADP-D-ribosyl)-L-cysteinyl-[protein] + nicotinamide + H(+). Functionally, ADP-ribosyltransferase that mediates mono-ADP-ribosylation of glutamate, aspartate and cysteine residues on target proteins. Acts as a negative regulator of AHR by mediating mono-ADP-ribosylation of AHR, leading to inhibit transcription activator activity of AHR. This is Protein mono-ADP-ribosyltransferase TIPARP from Mus musculus (Mouse).